The chain runs to 546 residues: High-affinity glucose transporter ght5 (546 aa).

Over 1-9 the chain is Cytoplasmic; it reads MGKNLTIVM. Residues 10 to 30 traverse the membrane as a helical segment; that stretch reads LVFVSMAGWMFGADTGSIGGI. Topologically, residues 31–58 are extracellular; that stretch reads TNMRDFQSRFADRYNPVTDSYSYSSARQ. The chain crosses the membrane as a helical span at residues 59-79; sequence GLITGMVNVGSFFGCFLSSPL. The Cytoplasmic portion of the chain corresponds to 80-87; the sequence is MDRIGKRT. A helical transmembrane segment spans residues 88–108; sequence SIMFWTIVYLIGIILQVTAVP. The Extracellular segment spans residues 109–112; that stretch reads SWVQ. The chain crosses the membrane as a helical span at residues 113 to 133; the sequence is IMVAKIWTGLSIGALSVLAPG. The Cytoplasmic portion of the chain corresponds to 134–144; it reads FQSEVAPADLR. A helical transmembrane segment spans residues 145-165; the sequence is GTIVTTYQLAVTGGIFIAACI. The Extracellular segment spans residues 166–179; it reads NMGTHKLHKTAQWR. A helical membrane pass occupies residues 180-200; it reads VSMGINLLWGIITFIGISFLP. At 201 to 266 the chain is on the cytoplasmic side; that stretch reads ESPRYLISVG…IFGPDIRYRT (66 aa). A helical transmembrane segment spans residues 267–285; that stretch reads FLGLGVMSLQQLTGDNYYF. At 286–301 the chain is on the extracellular side; that stretch reads YYGFEVFEGTGMNSPY. A helical membrane pass occupies residues 302-322; it reads LSALILDAVNFGCTFGGLFVL. Residues 323–328 are Cytoplasmic-facing; it reads EFFGRR. The chain crosses the membrane as a helical span at residues 329 to 349; sequence MPLIIGALWQSITFFIYAAVG. At 350–363 the chain is on the extracellular side; it reads NRALTRKNGTSNHR. N-linked (GlcNAc...) asparagine glycosylation occurs at N357. Residues 364-384 form a helical membrane-spanning segment; it reads AGAVMIVFSCLFIFSFAQTWG. Over 385–404 the chain is Cytoplasmic; it reads PAAYVIVGESYPIRYRSKCA. Residues 405-425 form a helical membrane-spanning segment; that stretch reads AVATTGNWLWGFLISFFTPFI. Residues 426–432 lie on the Extracellular side of the membrane; it reads TNSIGFK. Residues 433–453 form a helical membrane-spanning segment; it reads YGYIFAACNLCAACIIFLFAH. At 454–546 the chain is on the cytoplasmic side; that stretch reads ETKGLTLEEI…SYHDQEEQFA (93 aa). The interval 486–546 is disordered; sequence KQQEEVREKS…SYHDQEEQFA (61 aa). Residues 487 to 496 show a composition bias toward basic and acidic residues; that stretch reads QQEEVREKSR. The segment covering 509–519 has biased composition (acidic residues); that stretch reads VDGEEGIEDSS. The span at 520–529 shows a compositional bias: low complexity; it reads NDISSTTSSD. A phosphoserine mark is found at S528 and S537. A compositionally biased stretch (basic and acidic residues) spans 530–546; the sequence is GRAKPESSYHDQEEQFA.

It belongs to the major facilitator superfamily. Sugar transporter (TC 2.A.1.1) family.

Its subcellular location is the membrane. In terms of biological role, high-affinity glucose transporter. The protein is High-affinity glucose transporter ght5 (ght5) of Schizosaccharomyces pombe (strain 972 / ATCC 24843) (Fission yeast).